Reading from the N-terminus, the 314-residue chain is Ferric-anguibactin transport system permease protein FatD (314 aa).

10 helical membrane passes run 1 to 21 (MTFR…FFGA), 49 to 69 (VALI…QHIV), 76 to 96 (PGTT…IVML), 103 to 123 (ERMF…IAII), 132 to 152 (ALVP…AEFY), 180 to 200 (IIFL…RFTV), 207 to 226 (IASN…LILV), 230 to 252 (VAVT…NLVA), 265 to 285 (IVAL…RVVL), and 288 to 308 (FEVP…LAFL).

Belongs to the binding-protein-dependent transport system permease family. FecCD subfamily. As to quaternary structure, part of an iron transport system composed of the outer membrane receptor FatA, the periplasmic binding protein FatB and the inner membrane proteins FatC and FatD.

It localises to the cell inner membrane. Involved in the uptake of iron in complex with the siderophore anguibactin. Responsible for the translocation of ferric-anguibactin across the cytoplasmic membrane. The chain is Ferric-anguibactin transport system permease protein FatD from Vibrio anguillarum (strain ATCC 68554 / 775) (Listonella anguillarum).